The sequence spans 198 residues: dITP/XTP pyrophosphatase (198 aa).

Residue 7–12 (TRNAGK) participates in substrate binding. Mg(2+) is bound by residues Glu-40 and Asp-69. Asp-69 (proton acceptor) is an active-site residue. Substrate is bound by residues Ser-70, 152–155 (FGYD), Lys-175, and 180–181 (HR).

It belongs to the HAM1 NTPase family. Homodimer. Mg(2+) serves as cofactor.

The enzyme catalyses XTP + H2O = XMP + diphosphate + H(+). The catalysed reaction is dITP + H2O = dIMP + diphosphate + H(+). It carries out the reaction ITP + H2O = IMP + diphosphate + H(+). Functionally, pyrophosphatase that catalyzes the hydrolysis of nucleoside triphosphates to their monophosphate derivatives, with a high preference for the non-canonical purine nucleotides XTP (xanthosine triphosphate), dITP (deoxyinosine triphosphate) and ITP. Seems to function as a house-cleaning enzyme that removes non-canonical purine nucleotides from the nucleotide pool, thus preventing their incorporation into DNA/RNA and avoiding chromosomal lesions. This chain is dITP/XTP pyrophosphatase, found in Exiguobacterium sibiricum (strain DSM 17290 / CCUG 55495 / CIP 109462 / JCM 13490 / 255-15).